The sequence spans 230 residues: Urease accessory protein UreF (230 aa).

Belongs to the UreF family. UreD, UreF and UreG form a complex that acts as a GTP-hydrolysis-dependent molecular chaperone, activating the urease apoprotein by helping to assemble the nickel containing metallocenter of UreC. The UreE protein probably delivers the nickel.

It localises to the cytoplasm. Required for maturation of urease via the functional incorporation of the urease nickel metallocenter. The sequence is that of Urease accessory protein UreF from Cupriavidus taiwanensis (strain DSM 17343 / BCRC 17206 / CCUG 44338 / CIP 107171 / LMG 19424 / R1) (Ralstonia taiwanensis (strain LMG 19424)).